An 803-amino-acid chain; its full sequence is Translation initiation factor IF-2 (803 aa).

Disordered stretches follow at residues 95-125 and 138-178; these read PVVE…EKAE and EVKE…EREE. Over residues 111-121 the composition is skewed to polar residues; the sequence is VPLTSDTTNLN. Positions 138-155 are enriched in basic and acidic residues; sequence EVKEEAKKTPSEKKETPK. The span at 156–167 shows a compositional bias: basic residues; sequence KGPRKETRRSRK. Residues 168-178 show a composition bias toward basic and acidic residues; that stretch reads PDKEDKWEREE. The tr-type G domain maps to 302–471; that stretch reads PRAPVVTIMG…LLQAEVLELK (170 aa). Positions 311–318 are G1; the sequence is GHVDHGKT. 311 to 318 contributes to the GTP binding site; the sequence is GHVDHGKT. The tract at residues 336–340 is G2; sequence GITQH. Residues 357–360 form a G3 region; that stretch reads DTPG. Residues 357 to 361 and 411 to 414 each bind GTP; these read DTPGH and NKID. Residues 411 to 414 form a G4 region; it reads NKID. Residues 447–449 are G5; it reads SAK.

The protein belongs to the TRAFAC class translation factor GTPase superfamily. Classic translation factor GTPase family. IF-2 subfamily.

It localises to the cytoplasm. Functionally, one of the essential components for the initiation of protein synthesis. Protects formylmethionyl-tRNA from spontaneous hydrolysis and promotes its binding to the 30S ribosomal subunits. Also involved in the hydrolysis of GTP during the formation of the 70S ribosomal complex. In Coxiella burnetii (strain RSA 331 / Henzerling II), this protein is Translation initiation factor IF-2.